The sequence spans 78 residues: Translational regulator CsrA (78 aa).

Belongs to the CsrA/RsmA family. In terms of assembly, homodimer; the beta-strands of each monomer intercalate to form a hydrophobic core, while the alpha-helices form wings that extend away from the core.

It is found in the cytoplasm. A translational regulator that binds mRNA to regulate translation initiation and/or mRNA stability. Usually binds in the 5'-UTR at or near the Shine-Dalgarno sequence preventing ribosome-binding, thus repressing translation. Its main target seems to be the major flagellin gene, while its function is anatagonized by FliW. This is Translational regulator CsrA from Nitratidesulfovibrio vulgaris (strain ATCC 29579 / DSM 644 / CCUG 34227 / NCIMB 8303 / VKM B-1760 / Hildenborough) (Desulfovibrio vulgaris).